Consider the following 235-residue polypeptide: ATP-dependent Clp protease proteolytic subunit (235 aa).

The active-site Nucleophile is Ser123. His148 is a catalytic residue.

This sequence belongs to the peptidase S14 family. Fourteen ClpP subunits assemble into 2 heptameric rings which stack back to back to give a disk-like structure with a central cavity, resembling the structure of eukaryotic proteasomes.

It is found in the cytoplasm. The enzyme catalyses Hydrolysis of proteins to small peptides in the presence of ATP and magnesium. alpha-casein is the usual test substrate. In the absence of ATP, only oligopeptides shorter than five residues are hydrolyzed (such as succinyl-Leu-Tyr-|-NHMec, and Leu-Tyr-Leu-|-Tyr-Trp, in which cleavage of the -Tyr-|-Leu- and -Tyr-|-Trp bonds also occurs).. Cleaves peptides in various proteins in a process that requires ATP hydrolysis. Has a chymotrypsin-like activity. Plays a major role in the degradation of misfolded proteins. The sequence is that of ATP-dependent Clp protease proteolytic subunit from Novosphingobium aromaticivorans (strain ATCC 700278 / DSM 12444 / CCUG 56034 / CIP 105152 / NBRC 16084 / F199).